The sequence spans 558 residues: Phosphatidylserine lipase ABHD16A (558 aa).

2 helical membrane-spanning segments follow: residues 60–80 and 93–113; these read ILAL…FAFF and VVPF…VACL. Residues 114–558 are Cytoplasmic-facing; that stretch reads RGIGRWTNPQ…AQNFQMPWHL (445 aa). One can recognise an AB hydrolase-1 domain in the interval 281–407; it reads LVICCEGNAG…LVTRTVRQHL (127 aa). Active-site charge relay system residues include Ser-355, Asp-430, and His-507.

Belongs to the AB hydrolase superfamily. ABHD16 family.

The protein resides in the membrane. It carries out the reaction 1-heptadecanoyl-2-(5Z,8Z,11Z,14Z-eicosatetraenoyl)-sn-glycero-3-phosphoserine + H2O = 1-heptadecanoyl-sn-glycero-3-phosphoserine + (5Z,8Z,11Z,14Z)-eicosatetraenoate + H(+). The catalysed reaction is 1-hexadecanoyl-2-(9Z-octadecenoyl)-sn-glycero-3-phospho-L-serine + H2O = 1-hexadecanoyl-sn-glycero-3-phospho-L-serine + (9Z)-octadecenoate + H(+). It catalyses the reaction 1-octadecanoyl-2-(9Z,12Z-octadecadienoyl)-sn-glycero-3-phosphoserine + H2O = 1-octadecanoyl-sn-glycero-3-phosphoserine + (9Z,12Z)-octadecadienoate + H(+). The enzyme catalyses 1-heptadecanoyl-2-(5Z,8Z,11Z,14Z-eicosatetraenoyl)-sn-glycero-3-phosphocholine + H2O = 1-heptadecanoyl-sn-glycero-3-phosphocholine + (5Z,8Z,11Z,14Z)-eicosatetraenoate + H(+). It carries out the reaction 1-hexadecanoyl-2-(9Z-octadecenoyl)-sn-glycero-3-phosphoglycerol + H2O = 1-hexadecanoyl-sn-glycero-3-phosphoglycerol + (9Z)-octadecenoate + H(+). The catalysed reaction is 1-hexadecanoyl-2-(9Z-octadecenoyl)-sn-glycero-3-phospho-(1D-myo-inositol) + H2O = 1-hexadecanoyl-sn-glycero-3-phospho-(1D-myo-inositol) + (9Z)-octadecenoate + H(+). It catalyses the reaction 1-heptadecanoyl-2-(5Z,8Z,11Z,14Z-eicosatetraenoyl)-sn-glycero-3-phosphoethanolamine + H2O = 1-heptadecanoyl-sn-glycero-3-phosphoethanolamine + (5Z,8Z,11Z,14Z)-eicosatetraenoate + H(+). The enzyme catalyses 1-hexadecanoyl-2-(9Z-octadecenoyl)-sn-glycero-3-phospho-(1'-sn-glycerol) + H2O = 1-hexadecanoyl-sn-glycero-3-phospho-(1'-sn-glycerol) + (9Z)-octadecenoate + H(+). It carries out the reaction Hydrolyzes glycerol monoesters of long-chain fatty acids.. The catalysed reaction is 1-tetradecanoylglycerol + H2O = tetradecanoate + glycerol + H(+). It catalyses the reaction 2-hexadecanoylglycerol + H2O = glycerol + hexadecanoate + H(+). The enzyme catalyses 1-(9Z-octadecenoyl)-glycerol + H2O = glycerol + (9Z)-octadecenoate + H(+). It carries out the reaction 2-(9Z-octadecenoyl)-glycerol + H2O = glycerol + (9Z)-octadecenoate + H(+). The catalysed reaction is 2-(9Z,12Z-octadecadienoyl)-glycerol + H2O = (9Z,12Z)-octadecadienoate + glycerol + H(+). It catalyses the reaction 1-(5Z,8Z,11Z,14Z-eicosatetraenoyl)-glycerol + H2O = glycerol + (5Z,8Z,11Z,14Z)-eicosatetraenoate + H(+). The enzyme catalyses 2-(5Z,8Z,11Z,14Z-eicosatetraenoyl)-glycerol + H2O = glycerol + (5Z,8Z,11Z,14Z)-eicosatetraenoate + H(+). It carries out the reaction prostaglandin D2-1-glycerol ester + H2O = prostaglandin D2 + glycerol + H(+). The catalysed reaction is 2-glyceryl-15-deoxy-Delta(12,14)-prostaglandin J2 + H2O = 15-deoxy-Delta(12,14)-prostaglandin J2 + glycerol + H(+). It catalyses the reaction 1-(9Z,12Z-octadecadienoyl)-glycerol + H2O = (9Z,12Z)-octadecadienoate + glycerol + H(+). In terms of biological role, phosphatidylserine (PS) lipase that mediates the hydrolysis of phosphatidylserine to generate lysophosphatidylserine (LPS). LPS constitutes a class of signaling lipids that regulates immunological and neurological processes. Has no activity towards diacylglycerol, triacylglycerol or lysophosphatidylserine lipase. Also has monoacylglycerol lipase activity, with preference for 1-(9Z,12Z-octadecadienoyl)-glycerol (1-LG) and 2-glyceryl-15-deoxy-Delta(12,14)-prostaglandin J2 (15d-PGJ(2)-G). This is Phosphatidylserine lipase ABHD16A from Pongo abelii (Sumatran orangutan).